The sequence spans 298 residues: ATP phosphoribosyltransferase (298 aa).

The protein belongs to the ATP phosphoribosyltransferase family. Long subfamily. Mg(2+) serves as cofactor.

It localises to the cytoplasm. The catalysed reaction is 1-(5-phospho-beta-D-ribosyl)-ATP + diphosphate = 5-phospho-alpha-D-ribose 1-diphosphate + ATP. It functions in the pathway amino-acid biosynthesis; L-histidine biosynthesis; L-histidine from 5-phospho-alpha-D-ribose 1-diphosphate: step 1/9. Feedback inhibited by histidine. Catalyzes the condensation of ATP and 5-phosphoribose 1-diphosphate to form N'-(5'-phosphoribosyl)-ATP (PR-ATP). Has a crucial role in the pathway because the rate of histidine biosynthesis seems to be controlled primarily by regulation of HisG enzymatic activity. The polypeptide is ATP phosphoribosyltransferase (hisG) (Photobacterium profundum (strain SS9)).